The sequence spans 822 residues: Sodium/hydrogen exchanger 1 (822 aa).

Residues 1 to 102 (MMLRWSGIWG…FPVLDIDYLH (102 aa)) are Extracellular-facing. Positions 41–73 (SPTANTIRGAEPPRERSIGDVTTAPSEPVHHPD) are disordered. The helical transmembrane segment at 103 to 125 (VRTPFEISLWILLACLMKIGFHV) threads the bilayer. The Cytoplasmic segment spans residues 126–134 (IPTISSIVP). A helical transmembrane segment spans residues 135 to 152 (ESCLLIVVGLLVGGLIKG). Topologically, residues 153 to 162 (VGETPPFLQS) are extracellular. The helical transmembrane segment at 163–180 (DVFFLFLLPPIILDAGYF) threads the bilayer. At 181-190 (LPLRQFTENL) the chain is on the cytoplasmic side. The chain crosses the membrane as a helical span at residues 191–219 (GTILIFAVVGTLWNAFFLGGLLYAVCLVG). Over 220-226 (GEQINNI) the chain is Extracellular. The helical transmembrane segment at 227 to 253 (GLLDTLLFGSIISAVDPVAVVAVFEEI) threads the bilayer. The Cytoplasmic portion of the chain corresponds to 254-256 (HIN). Residues 257–287 (ELLHILVFGESLLNDAVTVVLYHLFEEFANY) traverse the membrane as a helical segment. Topologically, residues 288–291 (DSIG) are extracellular. Residues 292-326 (ISDIFLGFLSFFVVALGGVFVGVVYGVIAAFTSRF) traverse the membrane as a helical segment. Residues 327 to 332 (TSHIRV) are Cytoplasmic-facing. A helical membrane pass occupies residues 333-345 (IEPLFVFLYSYMA). The Extracellular segment spans residues 346-354 (YLSAELFHL). A helical transmembrane segment spans residues 355-375 (SGIMALIASGVVMRPYVEANI). At 376 to 377 (SH) the chain is on the cytoplasmic side. Residues 378 to 408 (KSHTTIKYFLKMWSSVSETLIFIFLGVSTVA) form a helical membrane-spanning segment. Topologically, residues 409–414 (GSHQWN) are extracellular. Residues 415–442 (WTFVISTLLFCLIARVLGVLVLTWFINK) traverse the membrane as a helical segment. Residues 443–448 (FRIVKL) are Cytoplasmic-facing. Residues 449 to 473 (TPKDQFIIAYGGLRGAIAFSLGYLM) traverse the membrane as a helical segment. Residues 474 to 479 (DKKHFP) lie on the Extracellular side of the membrane. A helical transmembrane segment spans residues 480-509 (MCDLFLTAIITVIFFTVFVQGMTIRPLVDL). An interaction with TESC region spans residues 507 to 549 (VDLLAVKKKQETKRSINEEIHTQFLDHLLTGIEDICGHYGHHH). The Cytoplasmic portion of the chain corresponds to 510–822 (LAVKKKQETK…EGEPFIPKGE (313 aa)). Positions 513–520 (KKKQETKR) are PI(4,5)P2-binding region. The interval 519-549 (KRSINEEIHTQFLDHLLTGIEDICGHYGHHH) is interaction with CHP2. Residues 544–549 (HYGHHH) are confers pH-dependent PI(4,5)P2 binding. The PI(4,5)P2-binding region stretch occupies residues 556-564 (RFNKKYVKK). Serine 603 and serine 606 each carry phosphoserine. A Phosphothreonine modification is found at threonine 607. Residues serine 609 and serine 652 each carry the phosphoserine modification. The tract at residues 637-822 (KILRSNLQKT…EGEPFIPKGE (186 aa)) is interaction with TESC. An interaction with CALM1 region spans residues 637–822 (KILRSNLQKT…EGEPFIPKGE (186 aa)). Residues 688-691 (LTVP) are interaction with PPP3CA. Serine 697, serine 701, and serine 707 each carry phosphoserine. An interaction with PPP3CA region spans residues 719–724 (PVITID). Residues serine 727, serine 730, and serine 733 each carry the phosphoserine modification. A disordered region spans residues 752–822 (PTRLTRGEED…EGEPFIPKGE (71 aa)). Phosphothreonine is present on threonine 756. Acidic residues predominate over residues 759 to 768 (EEDEDEDEDG). Threonine 786 is subject to Phosphothreonine. Residues serine 792, serine 794, and serine 803 each carry the phosphoserine modification.

This sequence belongs to the monovalent cation:proton antiporter 1 (CPA1) transporter (TC 2.A.36) family. As to quaternary structure, homodimer; dimerization is crucial for its function. Oligomer. Interacts with CALM in a calcium-dependent manner. Interacts with TESC. Interacts (via the juxtamembrane region of the cytoplasmic C-terminal domain) with CHP1; the interaction occurs at the plasma membrane in a calcium-dependent manner. Interacts with CHP2; the interaction occurs in a calcium-dependent manner. Interacts with EZR; regulates the cytoskeletal interactions of SLC9A1 and promotes stress fiber formation. Ubiquitinated, leading to its degradation by the proteasome. Ubiquitination is reduced by CHP1. Post-translationally, O-glycosylated. In terms of processing, palmitoylated; may play a major role in SLC9A1 regulation. Phosphorylation at Thr-786 increases SLC9A1 activity. Specifically dephosphorylated at Thr-786 by PPP3CA that negatively regulates SLC9A1 activity. Phosphorylation at Ser-652 by AKT1 reduces SLC9A1 binding to CALM1.

It is found in the cell membrane. The protein resides in the basolateral cell membrane. It carries out the reaction Na(+)(in) + H(+)(out) = Na(+)(out) + H(+)(in). The enzyme catalyses Li(+)(out) + H(+)(in) = Li(+)(in) + H(+)(out). It catalyses the reaction Li(+)(in) + Na(+)(out) = Li(+)(out) + Na(+)(in). Its activity is regulated as follows. Activated at acidic pHs. Inhibited by amiloride and 5-amino-substituted derivatives. Inhibited by cariporide and eniporide. Phosphatidylinositol 4,5-bisphosphate (PI(4,5)P2) and phosphatidylinositol 3,4,5-trisphosphate (PI(3,4,5)P3) bind and differentially regulate SLC9A1 activity. Electroneutral Na(+) /H(+) antiporter that extrudes Na(+) in exchange for external protons driven by the inward sodium ion chemical gradient, protecting cells from acidification that occurs from metabolism. Exchanges intracellular H(+) ions for extracellular Na(+) in 1:1 stoichiometry. Plays a key role in maintening intracellular pH neutral and cell volume, and thus is important for cell growth, proliferation, migration and survival. In addition, can transport lithium Li(+) and also functions as a Na(+)/Li(+) antiporter. SLC9A1 also functions in membrane anchoring and organization of scaffolding complexes that coordinate signaling inputs. The chain is Sodium/hydrogen exchanger 1 (SLC9A1) from Cricetulus griseus (Chinese hamster).